Reading from the N-terminus, the 359-residue chain is Olfactory receptor 5T2 (359 aa).

Over 1 to 64 the chain is Extracellular; that stretch reads MSYSIYKSTV…GFTDNLELQT (64 aa). Asn-44 is a glycosylation site (N-linked (GlcNAc...) asparagine). Residues 65–85 form a helical membrane-spanning segment; sequence IFFFLFLAIYLFTLMGNLGLI. Over 86-93 the chain is Cytoplasmic; that stretch reads LVVIRDSQ. The chain crosses the membrane as a helical span at residues 94-114; the sequence is LHKPMYYFLSMLSSVDACYSS. The Extracellular portion of the chain corresponds to 115–138; the sequence is VITPNMLVDFTTKNKVISFLGCVA. Residues 139 to 159 form a helical membrane-spanning segment; the sequence is QVFLACSFGTTECFLLAAMAY. Topologically, residues 160–178 are cytoplasmic; that stretch reads DRYVAIYNPLLYSVSMSPR. A helical membrane pass occupies residues 179-199; the sequence is VYMPLINASYVAGILHATIHT. Topologically, residues 200 to 235 are extracellular; the sequence is VATFSLSFCGANEIRRVFCDIPPLLAISYSDTHTNQ. A helical membrane pass occupies residues 236-256; sequence LLLFYFVGSIELVTILIVLIS. Topologically, residues 257–276 are cytoplasmic; sequence YGLILLAILKMYSAEGRRKV. The helical transmembrane segment at 277–297 threads the bilayer; it reads FSTCGAHLTGVSIYYGTILFM. At 298–310 the chain is on the extracellular side; that stretch reads YVRPSSSYASDHD. The helical transmembrane segment at 311–331 threads the bilayer; sequence MIVSIFYTIVIPLLNPVIYSL. Residues 332–359 lie on the Cytoplasmic side of the membrane; it reads RNKDVKDSMKKMFGKNQVINKVYFHTKK.

The protein belongs to the G-protein coupled receptor 1 family.

Its subcellular location is the cell membrane. In terms of biological role, odorant receptor. The sequence is that of Olfactory receptor 5T2 (OR5T2) from Homo sapiens (Human).